Reading from the N-terminus, the 25-residue chain is Pregnancy-associated glycoprotein 59g (25 aa).

Asn-4 carries an N-linked (GlcNAc...) asparagine glycan.

This sequence belongs to the peptidase A1 family. As to expression, highly expressed in the placenta between day 60 and day 100 of gestation.

The protein localises to the secreted. It is found in the extracellular space. The sequence is that of Pregnancy-associated glycoprotein 59g from Ovis aries (Sheep).